The chain runs to 464 residues: ATP synthase subunit beta (464 aa).

150–157 (GGAGVGKT) lines the ATP pocket.

The protein belongs to the ATPase alpha/beta chains family. In terms of assembly, F-type ATPases have 2 components, CF(1) - the catalytic core - and CF(0) - the membrane proton channel. CF(1) has five subunits: alpha(3), beta(3), gamma(1), delta(1), epsilon(1). CF(0) has three main subunits: a(1), b(2) and c(9-12). The alpha and beta chains form an alternating ring which encloses part of the gamma chain. CF(1) is attached to CF(0) by a central stalk formed by the gamma and epsilon chains, while a peripheral stalk is formed by the delta and b chains.

It localises to the cell membrane. The enzyme catalyses ATP + H2O + 4 H(+)(in) = ADP + phosphate + 5 H(+)(out). Functionally, produces ATP from ADP in the presence of a proton gradient across the membrane. The catalytic sites are hosted primarily by the beta subunits. This Dehalococcoides mccartyi (strain ATCC BAA-2100 / JCM 16839 / KCTC 5957 / BAV1) protein is ATP synthase subunit beta.